Reading from the N-terminus, the 415-residue chain is G patch domain-containing protein 4 (415 aa).

Met-1 is modified (N-acetylmethionine). Thr-4 is modified (phosphothreonine). Positions 11-57 (GMKFAEEQLLKHGWTQGKGLGRRENGITQALKVTLKQDNHGVGHDPA) constitute a G-patch domain. A Glycyl lysine isopeptide (Lys-Gly) (interchain with G-Cter in SUMO2) cross-link involves residue Lys-46. Phosphothreonine is present on Thr-116. 2 disordered regions span residues 116–141 (TSGE…TPPK) and 191–415 (LGTS…VDLS). The span at 118-141 (GEEKPDRDLGNCSDVDNHEPTPPK) shows a compositional bias: basic and acidic residues. Ser-130 carries the post-translational modification Phosphoserine. Positions 191 to 201 (LGTSQPLTDSE) are enriched in polar residues. Residues 224–239 (SLGDELLGHTDRSFRD) are compositionally biased toward basic and acidic residues. Phosphoserine is present on Ser-258. The segment covering 335–345 (EDLDTQEEEGK) has biased composition (acidic residues). Residues 353–364 (RKVRRKDKRKRQ) are compositionally biased toward basic residues. A compositionally biased stretch (basic and acidic residues) spans 387-397 (AGERSRQYPKE). Over residues 398 to 407 (RAKKKKRKRD) the composition is skewed to basic residues.

The chain is G patch domain-containing protein 4 (Gpatch4) from Mus musculus (Mouse).